The following is a 198-amino-acid chain: Recombination protein RecR (198 aa).

A C4-type zinc finger spans residues 58–73 (CKVCQTLTDKEICPIC). A Toprim domain is found at 81-175 (KVIMVVENTR…KVSRIASGVP (95 aa)).

The protein belongs to the RecR family.

Functionally, may play a role in DNA repair. It seems to be involved in an RecBC-independent recombinational process of DNA repair. It may act with RecF and RecO. The polypeptide is Recombination protein RecR (Lachnoclostridium phytofermentans (strain ATCC 700394 / DSM 18823 / ISDg) (Clostridium phytofermentans)).